The following is a 193-amino-acid chain: Molybdopterin synthase catalytic subunit (193 aa).

Substrate-binding positions include 118 to 119, Lys-134, and 141 to 143; these read HR and KKE. The disordered stretch occupies residues 159–193; sequence DRTTTDGTTASSPAPATRPAKGGGCCGRKVRVNES. Residues 163 to 178 are compositionally biased toward low complexity; the sequence is TDGTTASSPAPATRPA.

The protein belongs to the MoaE family. MOCS2B subfamily. As to quaternary structure, heterotetramer; composed of 2 small (MOCS2A) and 2 large (MOCS2B) subunits.

Its subcellular location is the cytoplasm. It catalyses the reaction 2 [molybdopterin-synthase sulfur-carrier protein]-C-terminal-Gly-aminoethanethioate + cyclic pyranopterin phosphate + H2O = molybdopterin + 2 [molybdopterin-synthase sulfur-carrier protein]-C-terminal Gly-Gly + 2 H(+). It participates in cofactor biosynthesis; molybdopterin biosynthesis. Functionally, catalytic subunit of the molybdopterin synthase complex, a complex that catalyzes the conversion of precursor Z into molybdopterin. Acts by mediating the incorporation of 2 sulfur atoms from thiocarboxylated MOCS2A into precursor Z to generate a dithiolene group. In Oryza sativa subsp. japonica (Rice), this protein is Molybdopterin synthase catalytic subunit.